The following is a 191-amino-acid chain: General negative regulator of transcription subunit 2 (191 aa).

It belongs to the CNOT2/3/5 family. Forms a NOT protein complex that comprises NOT1, NOT2, NOT3, NOT4 and NOT5. Subunit of the 1.0 MDa CCR4-NOT core complex that contains CCR4, CAF1, NOT1, NOT2, NOT3, NOT4, NOT5, CAF40 and CAF130. In the complex interacts with NOT1 and NOT5. The core complex probably is part of a less characterized 1.9 MDa CCR4-NOT complex.

Its subcellular location is the cytoplasm. The protein resides in the nucleus. Acts as a component of the CCR4-NOT core complex, which in the nucleus seems to be a general transcription factor, and in the cytoplasm the major mRNA deadenylase involved in mRNA turnover. NOT2 is required for the integrity of the complex. The NOT protein subcomplex negatively regulates the basal and activated transcription of many genes. Preferentially affects TC-type TATA element-dependent transcription. Could directly or indirectly inhibit component(s) of the general transcription machinery. The polypeptide is General negative regulator of transcription subunit 2 (CDC36) (Saccharomyces cerevisiae (strain ATCC 204508 / S288c) (Baker's yeast)).